The following is a 208-amino-acid chain: Outer-membrane lipoprotein carrier protein (208 aa).

An N-terminal signal peptide occupies residues 1–22 (MLKPLSQLVCALPLVVAASSYA).

Belongs to the LolA family. Monomer.

Its subcellular location is the periplasm. Its function is as follows. Participates in the translocation of lipoproteins from the inner membrane to the outer membrane. Only forms a complex with a lipoprotein if the residue after the N-terminal Cys is not an aspartate (The Asp acts as a targeting signal to indicate that the lipoprotein should stay in the inner membrane). The polypeptide is Outer-membrane lipoprotein carrier protein (Shewanella loihica (strain ATCC BAA-1088 / PV-4)).